Consider the following 484-residue polypeptide: tRNA sulfurtransferase (484 aa).

Residues 63–167 enclose the THUMP domain; that stretch reads QAFGERLACI…RDNLYMVTKR (105 aa). Residues 185 to 186, lysine 267, glycine 289, and glutamine 298 contribute to the ATP site; that span reads LI. A disulfide bridge links cysteine 346 with cysteine 458. The region spanning 406–484 is the Rhodanese domain; the sequence is IDTNQVVIDI…GYTNVKVYRP (79 aa). The active-site Cysteine persulfide intermediate is cysteine 458.

It belongs to the ThiI family.

It is found in the cytoplasm. The catalysed reaction is [ThiI sulfur-carrier protein]-S-sulfanyl-L-cysteine + a uridine in tRNA + 2 reduced [2Fe-2S]-[ferredoxin] + ATP + H(+) = [ThiI sulfur-carrier protein]-L-cysteine + a 4-thiouridine in tRNA + 2 oxidized [2Fe-2S]-[ferredoxin] + AMP + diphosphate. It catalyses the reaction [ThiS sulfur-carrier protein]-C-terminal Gly-Gly-AMP + S-sulfanyl-L-cysteinyl-[cysteine desulfurase] + AH2 = [ThiS sulfur-carrier protein]-C-terminal-Gly-aminoethanethioate + L-cysteinyl-[cysteine desulfurase] + A + AMP + 2 H(+). It functions in the pathway cofactor biosynthesis; thiamine diphosphate biosynthesis. In terms of biological role, catalyzes the ATP-dependent transfer of a sulfur to tRNA to produce 4-thiouridine in position 8 of tRNAs, which functions as a near-UV photosensor. Also catalyzes the transfer of sulfur to the sulfur carrier protein ThiS, forming ThiS-thiocarboxylate. This is a step in the synthesis of thiazole, in the thiamine biosynthesis pathway. The sulfur is donated as persulfide by IscS. This is tRNA sulfurtransferase from Shewanella baltica (strain OS155 / ATCC BAA-1091).